The primary structure comprises 258 residues: Gamma-secretase subunit Aph-1b (258 aa).

The next 7 membrane-spanning stretches (helical) occupy residues 3 to 23 (VAVF…LFMF), 32 to 52 (VIFL…SSLV), 70 to 90 (GLLI…RYGY), 118 to 138 (AYVS…VNIL), 161 to 181 (AFMT…FFEA), 187 to 207 (WWAL…TFVN), and 214 to 234 (LIPT…CAGG).

This sequence belongs to the APH-1 family. In terms of assembly, component of the gamma-secretase complex, a complex composed of a presenilin homodimer (PSEN1 or PSEN2), nicastrin (NCSTN), APH1 and PEN2.

Its subcellular location is the membrane. In terms of biological role, essential subunit of the gamma-secretase complex, an endoprotease complex that catalyzes the intramembrane cleavage of integral proteins such as Notch receptors. It may represent a stabilizing cofactor for the presenilin homodimer that promotes the formation of a stable complex. In Danio rerio (Zebrafish), this protein is Gamma-secretase subunit Aph-1b (aph1b).